Reading from the N-terminus, the 192-residue chain is MIVIVDYGLGNISNVKRAIEHLGYEVVVSNKQNIIDQAETIILPGVGHFKDAMSEIKRLNLDAILAKNTDKKMIGICLGMQLMYEHSDEGDASGLGFIPGNISRIQTEYPVPHLGWNNLVSKHPMLNQDVYFVHSYQAPMSENVIAYAQYGTDIPAIVQFNNYIGIQFHPEKSGTYGLQILRQAIQGGFIND.

One can recognise a Glutamine amidotransferase type-1 domain in the interval methionine 1 to aspartate 192. The active-site Nucleophile is the cysteine 77. Active-site residues include histidine 169 and glutamate 171.

In terms of assembly, heterodimer of HisH and HisF.

The protein localises to the cytoplasm. It carries out the reaction 5-[(5-phospho-1-deoxy-D-ribulos-1-ylimino)methylamino]-1-(5-phospho-beta-D-ribosyl)imidazole-4-carboxamide + L-glutamine = D-erythro-1-(imidazol-4-yl)glycerol 3-phosphate + 5-amino-1-(5-phospho-beta-D-ribosyl)imidazole-4-carboxamide + L-glutamate + H(+). It catalyses the reaction L-glutamine + H2O = L-glutamate + NH4(+). It participates in amino-acid biosynthesis; L-histidine biosynthesis; L-histidine from 5-phospho-alpha-D-ribose 1-diphosphate: step 5/9. IGPS catalyzes the conversion of PRFAR and glutamine to IGP, AICAR and glutamate. The HisH subunit catalyzes the hydrolysis of glutamine to glutamate and ammonia as part of the synthesis of IGP and AICAR. The resulting ammonia molecule is channeled to the active site of HisF. The chain is Imidazole glycerol phosphate synthase subunit HisH from Staphylococcus aureus (strain bovine RF122 / ET3-1).